The primary structure comprises 416 residues: Serine hydroxymethyltransferase (416 aa).

(6S)-5,6,7,8-tetrahydrofolate-binding positions include Leu121 and Gly125 to Leu127. At Lys229 the chain carries N6-(pyridoxal phosphate)lysine.

Belongs to the SHMT family. Homodimer. Pyridoxal 5'-phosphate serves as cofactor.

Its subcellular location is the cytoplasm. It catalyses the reaction (6R)-5,10-methylene-5,6,7,8-tetrahydrofolate + glycine + H2O = (6S)-5,6,7,8-tetrahydrofolate + L-serine. It functions in the pathway one-carbon metabolism; tetrahydrofolate interconversion. Its pathway is amino-acid biosynthesis; glycine biosynthesis; glycine from L-serine: step 1/1. Functionally, catalyzes the reversible interconversion of serine and glycine with tetrahydrofolate (THF) serving as the one-carbon carrier. This reaction serves as the major source of one-carbon groups required for the biosynthesis of purines, thymidylate, methionine, and other important biomolecules. Also exhibits THF-independent aldolase activity toward beta-hydroxyamino acids, producing glycine and aldehydes, via a retro-aldol mechanism. This Neisseria meningitidis serogroup C / serotype 2a (strain ATCC 700532 / DSM 15464 / FAM18) protein is Serine hydroxymethyltransferase.